The primary structure comprises 306 residues: tRNA-cytidine(32) 2-sulfurtransferase (306 aa).

The tract at residues 1-25 (MSAVISLPDPQPRAARDPRVAEREQ) is disordered. Residues 14 to 25 (AARDPRVAEREQ) show a composition bias toward basic and acidic residues. The PP-loop motif motif lies at 57–62 (SGGKDS). 3 residues coordinate [4Fe-4S] cluster: cysteine 132, cysteine 135, and cysteine 223. The segment at 286 to 306 (AHAWLAGSPADADADPETPTV) is disordered. Acidic residues predominate over residues 297-306 (ADADPETPTV).

It belongs to the TtcA family. Homodimer. Mg(2+) is required as a cofactor. The cofactor is [4Fe-4S] cluster.

It is found in the cytoplasm. It catalyses the reaction cytidine(32) in tRNA + S-sulfanyl-L-cysteinyl-[cysteine desulfurase] + AH2 + ATP = 2-thiocytidine(32) in tRNA + L-cysteinyl-[cysteine desulfurase] + A + AMP + diphosphate + H(+). Its pathway is tRNA modification. Catalyzes the ATP-dependent 2-thiolation of cytidine in position 32 of tRNA, to form 2-thiocytidine (s(2)C32). The sulfur atoms are provided by the cysteine/cysteine desulfurase (IscS) system. In Stenotrophomonas maltophilia (strain K279a), this protein is tRNA-cytidine(32) 2-sulfurtransferase.